Here is a 127-residue protein sequence, read N- to C-terminus: Class I hydrophobin 1 (127 aa).

Residues M1–A20 form the signal peptide. 4 disulfides stabilise this stretch: C53–C108, C60–C102, C61–C94, and C109–C122. Residue N66 is glycosylated (N-linked (GlcNAc...) asparagine).

It belongs to the fungal hydrophobin family. In terms of assembly, self-assembles to form functional amyloid fibrils called rodlets. Self-assembly into fibrillar rodlets occurs spontaneously at hydrophobic:hydrophilic interfaces and the rodlets further associate laterally to form amphipathic monolayers. As to expression, expressed everywhere in the mycelial tissues of developing fruiting bodies except for the top parts of the pileus (cap) and for the prehymenophore; but high level of the transcript is detected in the parts surrounding the prehymenophore.

Its subcellular location is the secreted. The protein localises to the cell wall. In terms of biological role, aerial growth, conidiation, and dispersal of filamentous fungi in the environment rely upon a capability of their secreting small amphipathic proteins called hydrophobins (HPBs) with low sequence identity. Class I can self-assemble into an outermost layer of rodlet bundles on aerial cell surfaces, conferring cellular hydrophobicity that supports fungal growth, development and dispersal; whereas Class II form highly ordered films at water-air interfaces through intermolecular interactions but contribute nothing to the rodlet structure. Hyd1 is a class I hydrophobin that plays a role in fruiting body initiation rather than in mature fruit body maintenance. Seems to be involved in the formation in the extracellular matrix of lined air channels with a hydrophobic membrane. These channels may help to provide gas exchange during respiration in mycelial tissues of developing fruiting bodies and are formed all over the mycelial tissues of these developing fruiting bodies except for the top parts of the pileus (cap) and for the prehymenophore. This Lentinula edodes (Shiitake mushroom) protein is Class I hydrophobin 1.